The chain runs to 398 residues: Protein ELC (398 aa).

Residues 18–162 (ALSQRGPSSV…ARDPPLYSRR (145 aa)) enclose the UEV domain. The interval 157-202 (PLYSRRRPQPPPPSPPTVYDSSLSRPPSADQSLPRPFPPSPYGGGV) is disordered. Over residues 175 to 187 (YDSSLSRPPSADQ) the composition is skewed to polar residues. Residues 247 to 291 (EAEAEELLSLQAGLKRREDELNIGLKEMVEEKETLEQQLQIISMN) are a coiled coil. The SB domain occupies 322 to 390 (DTLSKQMLEC…RAAQMEVQVA (69 aa)).

This sequence belongs to the ubiquitin-conjugating enzyme family. UEV subfamily. In terms of assembly, component of the endosomal sorting required for transport complex I (ESCRT-I), composed of ELC, VPS28 and VPS37. Interacts with VPS28 and VPS37. Binds ubiquitin in vitro. Interacts with FREE1. Interacts with TOL9/TOM1D. Interacts with BRO1/ALIX. Interacts with SINAT1, SINAT2, SINAT3 and SINAT4. Ubiquitinated by SINAT1, SINAT2, SINAT3 and SINAT4 for subsequent proteasomal degradation. As to expression, expressed in roots, stems, leaves and flowers.

Its subcellular location is the early endosome. It localises to the late endosome. The protein localises to the prevacuolar compartment. Functionally, component of the ESCRT-I complex (endosomal sorting complex required for transport I), a regulator of vesicular trafficking process. Required for the sorting of endocytic ubiquitinated cargos into multivesicular bodies (MVBs). May control nuclear division through the microtubule cytoskeleton. The protein is Protein ELC of Arabidopsis thaliana (Mouse-ear cress).